The following is a 181-amino-acid chain: Large ribosomal subunit protein uL10 (181 aa).

The protein belongs to the universal ribosomal protein uL10 family. Part of the ribosomal stalk of the 50S ribosomal subunit. The N-terminus interacts with L11 and the large rRNA to form the base of the stalk. The C-terminus forms an elongated spine to which L12 dimers bind in a sequential fashion forming a multimeric L10(L12)X complex.

In terms of biological role, forms part of the ribosomal stalk, playing a central role in the interaction of the ribosome with GTP-bound translation factors. This chain is Large ribosomal subunit protein uL10, found in Trichormus variabilis (strain ATCC 29413 / PCC 7937) (Anabaena variabilis).